Reading from the N-terminus, the 122-residue chain is Large ribosomal subunit protein uL14 (122 aa).

The protein belongs to the universal ribosomal protein uL14 family. Part of the 50S ribosomal subunit. Forms a cluster with proteins L3 and L19. In the 70S ribosome, L14 and L19 interact and together make contacts with the 16S rRNA in bridges B5 and B8.

Functionally, binds to 23S rRNA. Forms part of two intersubunit bridges in the 70S ribosome. The polypeptide is Large ribosomal subunit protein uL14 (Frankia alni (strain DSM 45986 / CECT 9034 / ACN14a)).